Here is a 361-residue protein sequence, read N- to C-terminus: tRNA 2-selenouridine synthase (361 aa).

Residues 11–134 (LIADTPLIDV…LRQTAIQATW (124 aa)) enclose the Rhodanese domain. The active-site S-selanylcysteine intermediate is the Cys94.

Belongs to the SelU family. Monomer.

It carries out the reaction 5-methylaminomethyl-2-thiouridine(34) in tRNA + selenophosphate + (2E)-geranyl diphosphate + H2O + H(+) = 5-methylaminomethyl-2-selenouridine(34) in tRNA + (2E)-thiogeraniol + phosphate + diphosphate. The enzyme catalyses 5-methylaminomethyl-2-thiouridine(34) in tRNA + (2E)-geranyl diphosphate = 5-methylaminomethyl-S-(2E)-geranyl-thiouridine(34) in tRNA + diphosphate. The catalysed reaction is 5-methylaminomethyl-S-(2E)-geranyl-thiouridine(34) in tRNA + selenophosphate + H(+) = 5-methylaminomethyl-2-(Se-phospho)selenouridine(34) in tRNA + (2E)-thiogeraniol. It catalyses the reaction 5-methylaminomethyl-2-(Se-phospho)selenouridine(34) in tRNA + H2O = 5-methylaminomethyl-2-selenouridine(34) in tRNA + phosphate. Functionally, involved in the post-transcriptional modification of the uridine at the wobble position (U34) of tRNA(Lys), tRNA(Glu) and tRNA(Gln). Catalyzes the conversion of 2-thiouridine (S2U-RNA) to 2-selenouridine (Se2U-RNA). Acts in a two-step process involving geranylation of 2-thiouridine (S2U) to S-geranyl-2-thiouridine (geS2U) and subsequent selenation of the latter derivative to 2-selenouridine (Se2U) in the tRNA chain. The polypeptide is tRNA 2-selenouridine synthase (Salmonella arizonae (strain ATCC BAA-731 / CDC346-86 / RSK2980)).